The following is a 392-amino-acid chain: Speckle-type POZ protein-like B (392 aa).

Residues 31-161 form the MATH domain; sequence KFSYMWTINN…DDKLTLFCEV (131 aa). A BTB domain is found at 200-267; that stretch reads TDCSLFVGGQ…IYTGKAPNLE (68 aa).

The protein belongs to the Tdpoz family. Homodimer. Heterodimer with SPOP. Component of cullin-RING-based BCR (BTB-CUL3-RBX1) E3 ubiquitin-protein ligase complexes containing homodimeric SPOPL or the heterodimer formed by SPOP and SPOPL.

It localises to the nucleus. The protein operates within protein modification; protein ubiquitination. Component of a cullin-RING-based BCR (BTB-CUL3-RBX1) E3 ubiquitin-protein ligase complex that mediates the ubiquitination and subsequent proteasomal degradation of target proteins, but with relatively low efficiency. In Danio rerio (Zebrafish), this protein is Speckle-type POZ protein-like B (spoplb).